A 174-amino-acid polypeptide reads, in one-letter code: Repair DNA polymerase X (174 aa).

The segment at 42-51 (REEKMLNDVD) is involved in ssDNA binding. Mg(2+)-binding residues include Asp49 and Asp51. A disulfide bridge connects residues Cys81 and Cys86. Mg(2+) is bound at residue Asp100.

Belongs to the DNA polymerase type-X family. Requires Mg(2+) as cofactor.

It is found in the virion. It catalyses the reaction DNA(n) + a 2'-deoxyribonucleoside 5'-triphosphate = DNA(n+1) + diphosphate. In terms of biological role, error-prone polymerase lacking a proofreading 3'-5' exonuclease which catalyzes the gap-filling reaction during the DNA repair process. Specifically binds intermediates in the single-nucleotide base-excision repair process. Also catalyzes DNA polymerization with low nucleotide-insertion fidelity. Probably acts as a strategic DNA mutase, which gives rise to a rapid emergence of variants. Generates mismatched G-G pairs, in that case, the polymerase first binds the deoxynucleotide followed by mismatch formation. Together with the viral DNA ligase, fills the single nucleotide gaps generated by the AP endonuclease. Binds DNA with high affinity via the helix alphaE. The sequence is that of Repair DNA polymerase X from Ornithodoros (relapsing fever ticks).